The following is a 307-amino-acid chain: Transcription factor bHLH127 (307 aa).

Disordered stretches follow at residues 41-68 (SDPL…LPHQ) and 101-155 (PHPQ…AEMH). The span at 110-119 (APPPPKPPSS) shows a compositional bias: pro residues. Positions 150–199 (RAAEMHNLAERRRREKINERMKTLQQLIPRCNKSTKVSMLEDVIEYVKSL) constitute a bHLH domain.

Belongs to the bHLH protein family. In terms of assembly, homodimer.

The protein localises to the nucleus. In Arabidopsis thaliana (Mouse-ear cress), this protein is Transcription factor bHLH127 (BHLH127).